The primary structure comprises 442 residues: Protein IQ-DOMAIN 33 (442 aa).

Residues 159–188 enclose the IQ domain; that stretch reads EEDAAVIIQSAFRSYLAIRRSKEEEETFAK. Residues 184–212 form a disordered region; it reads ETFAKEESFSGEESQDNASMGTSLEAQTG. Residues 199 to 212 show a composition bias toward polar residues; that stretch reads DNASMGTSLEAQTG. The calmodulin-binding stretch occupies residues 270-282; it reads RERALAYAFSQQL. Residues 375–442 form a disordered region; it reads EKSSFKPSIS…ETSHKLNSST (68 aa). The segment covering 383–402 has biased composition (basic residues); that stretch reads ISKRKSVPSYKSQRKHHKLQ. The Nuclear localization signal signature appears at 385–392; sequence KRKSVPSY.

Belongs to the IQD family. As to quaternary structure, binds to multiple calmodulin (CaM) in the presence of Ca(2+) and CaM-like proteins.

The protein localises to the nucleus. Its function is as follows. May be involved in cooperative interactions with calmodulins or calmodulin-like proteins. Recruits calmodulin proteins to microtubules, thus being a potential scaffold in cellular signaling and trafficking. May associate with nucleic acids and regulate gene expression at the transcriptional or post-transcriptional level. This Arabidopsis thaliana (Mouse-ear cress) protein is Protein IQ-DOMAIN 33.